A 140-amino-acid polypeptide reads, in one-letter code: Putative pre-16S rRNA nuclease (140 aa).

The protein belongs to the YqgF nuclease family.

Its subcellular location is the cytoplasm. Its function is as follows. Could be a nuclease involved in processing of the 5'-end of pre-16S rRNA. The chain is Putative pre-16S rRNA nuclease from Mycoplasma pneumoniae (strain ATCC 29342 / M129 / Subtype 1) (Mycoplasmoides pneumoniae).